Reading from the N-terminus, the 286-residue chain is 4-diphosphocytidyl-2-C-methyl-D-erythritol kinase (286 aa).

Residue Lys-11 is part of the active site. ATP is bound at residue 94–104 (PMGGGIGGGSS). The active site involves Asp-136.

It belongs to the GHMP kinase family. IspE subfamily.

It carries out the reaction 4-CDP-2-C-methyl-D-erythritol + ATP = 4-CDP-2-C-methyl-D-erythritol 2-phosphate + ADP + H(+). It functions in the pathway isoprenoid biosynthesis; isopentenyl diphosphate biosynthesis via DXP pathway; isopentenyl diphosphate from 1-deoxy-D-xylulose 5-phosphate: step 3/6. In terms of biological role, catalyzes the phosphorylation of the position 2 hydroxy group of 4-diphosphocytidyl-2C-methyl-D-erythritol. This is 4-diphosphocytidyl-2-C-methyl-D-erythritol kinase from Pseudomonas entomophila (strain L48).